The following is a 173-amino-acid chain: Spermidine N(1)-acetyltransferase (173 aa).

An N-acetyltransferase domain is found at 5-162 (LTLRALERGD…GRYQDVKRMY (158 aa)). Spermine is bound by residues methionine 28, glutamate 33, glutamate 41, and 49–52 (HIHD). Glutamate 33 lines the Mg(2+) pocket. Spermidine-binding residues include glutamate 33 and glutamate 41. Glutamate 75 contacts Mg(2+). Position 84–86 (84–86 (EFQ)) interacts with spermine. Acetyl-CoA contacts are provided by residues 87–89 (III), 94–100 (QGKGFAR), and 127–136 (NPKAVHLYEE). The active-site Proton donor is tyrosine 134.

It belongs to the acetyltransferase family. In terms of assembly, homododecamer; dimer of hexamers. Exists in solution in a variety of protein homooligomeric states including dodecamers in an open state. The presence of the polyamines spermidine or spermine shifts the equilibrium to dodecamers and induces the formation of the closed, symmetric dodecamers.

The protein resides in the cytoplasm. The enzyme catalyses an alkane-alpha,omega-diamine + acetyl-CoA = an N-acetylalkane-alpha,omega-diamine + CoA + H(+). The catalysed reaction is spermidine + acetyl-CoA = N(1)-acetylspermidine + CoA + H(+). It catalyses the reaction spermidine + acetyl-CoA = N(8)-acetylspermidine + CoA + H(+). It carries out the reaction spermine + acetyl-CoA = N(1)-acetylspermine + CoA + H(+). The protein operates within amine and polyamine degradation; spermidine degradation. Its pathway is amine and polyamine degradation; spermine degradation. Allosterically regulated by polyamines. Polyamines trigger conformational changes and induce the symmetric closed dodecameric state of the protein when they bind to their allosteric sites. Functionally, involved in the protection against polyamine toxicity by regulating their concentration. Catalyzes the transfer of an acetyl group from acetyl coenzyme A (AcCoA) to the primary amino groups of spermidine to yield N(1)- and N(8)-acetylspermidine. It can use polyamines such as spermine and N(1)-acetylspermine, but not putrescine or cadaverine. This is Spermidine N(1)-acetyltransferase (speG) from Vibrio cholerae serotype O1 (strain ATCC 39315 / El Tor Inaba N16961).